The primary structure comprises 124 residues: Small ribosomal subunit protein bS6 (124 aa).

A disordered region spans residues 99–124 (PLPAPRIVPGSEPEPVEQQEAAAVEA). Residues 114–124 (VEQQEAAAVEA) are compositionally biased toward low complexity.

This sequence belongs to the bacterial ribosomal protein bS6 family.

Its function is as follows. Binds together with bS18 to 16S ribosomal RNA. This Prochlorococcus marinus (strain MIT 9303) protein is Small ribosomal subunit protein bS6.